A 1239-amino-acid chain; its full sequence is Erythroid differentiation-related factor 1 (1239 aa).

4 disordered regions span residues M1–A39, A219–L269, P517–D559, and K620–G646. 2 stretches are compositionally biased toward low complexity: residues A9 to A28 and S253 to S263. Positions N530–E547 are enriched in acidic residues. 2 TPR repeats span residues S693–Y726 and A914–R953.

It localises to the nucleus. Its function is as follows. Transcription factor involved in erythroid differentiation. Involved in transcriptional activation of the globin gene. The protein is Erythroid differentiation-related factor 1 (Edrf1) of Mus musculus (Mouse).